The primary structure comprises 185 residues: Elongation factor P (185 aa).

The protein belongs to the elongation factor P family.

The protein localises to the cytoplasm. It participates in protein biosynthesis; polypeptide chain elongation. In terms of biological role, involved in peptide bond synthesis. Stimulates efficient translation and peptide-bond synthesis on native or reconstituted 70S ribosomes in vitro. Probably functions indirectly by altering the affinity of the ribosome for aminoacyl-tRNA, thus increasing their reactivity as acceptors for peptidyl transferase. In Dictyoglomus turgidum (strain DSM 6724 / Z-1310), this protein is Elongation factor P.